The chain runs to 276 residues: Mitochondrial outer membrane protein porin 6 (276 aa).

The protein belongs to the eukaryotic mitochondrial porin (TC 1.B.8.1) family.

The protein localises to the mitochondrion outer membrane. Functionally, forms a channel through the mitochondrial outer membrane that allows diffusion of small hydrophilic molecules. The channel adopts an open conformation at low or zero membrane potential and a closed conformation at potentials above 30-40 mV. The open state has a weak anion selectivity whereas the closed state is cation-selective. This Oryza sativa subsp. japonica (Rice) protein is Mitochondrial outer membrane protein porin 6 (VDAC6).